A 351-amino-acid chain; its full sequence is Glycerol-3-phosphate dehydrogenase [NAD(P)+] (351 aa).

The NADPH site is built by Ser18, Trp19, Arg38, and Lys122. Sn-glycerol 3-phosphate is bound by residues Lys122, Gly153, and Ser155. Ala157 is an NADPH binding site. The sn-glycerol 3-phosphate site is built by Lys208, Asp261, Ser271, Arg272, and Asn273. The active-site Proton acceptor is the Lys208. An NADPH-binding site is contributed by Arg272. Glu297 provides a ligand contact to NADPH.

This sequence belongs to the NAD-dependent glycerol-3-phosphate dehydrogenase family.

Its subcellular location is the cytoplasm. It carries out the reaction sn-glycerol 3-phosphate + NAD(+) = dihydroxyacetone phosphate + NADH + H(+). The catalysed reaction is sn-glycerol 3-phosphate + NADP(+) = dihydroxyacetone phosphate + NADPH + H(+). It participates in membrane lipid metabolism; glycerophospholipid metabolism. Catalyzes the reduction of the glycolytic intermediate dihydroxyacetone phosphate (DHAP) to sn-glycerol 3-phosphate (G3P), the key precursor for phospholipid synthesis. The chain is Glycerol-3-phosphate dehydrogenase [NAD(P)+] from Bordetella bronchiseptica (strain ATCC BAA-588 / NCTC 13252 / RB50) (Alcaligenes bronchisepticus).